We begin with the raw amino-acid sequence, 327 residues long: Undecaprenyl-phosphate 4-deoxy-4-formamido-L-arabinose transferase (327 aa).

Residues 1–235 lie on the Cytoplasmic side of the membrane; the sequence is MFDAAPIKKV…TCLTTTPLRL (235 aa). The helical transmembrane segment at 236–256 threads the bilayer; sequence LSLLGSVIAIGGFSLSVLLIV. Residues 257-269 are Periplasmic-facing; the sequence is LRLALGPQWAAEG. Residues 270–290 traverse the membrane as a helical segment; sequence VFMLFAVLFTFIGAQFIGMGL. Residues 291-327 are Cytoplasmic-facing; sequence LGEYIGRIYNDVRARPRYFVQQVIYPESTSFTEESHQ.

Belongs to the glycosyltransferase 2 family.

Its subcellular location is the cell inner membrane. The enzyme catalyses UDP-4-deoxy-4-formamido-beta-L-arabinose + di-trans,octa-cis-undecaprenyl phosphate = 4-deoxy-4-formamido-alpha-L-arabinopyranosyl di-trans,octa-cis-undecaprenyl phosphate + UDP. The protein operates within glycolipid biosynthesis; 4-amino-4-deoxy-alpha-L-arabinose undecaprenyl phosphate biosynthesis; 4-amino-4-deoxy-alpha-L-arabinose undecaprenyl phosphate from UDP-4-deoxy-4-formamido-beta-L-arabinose and undecaprenyl phosphate: step 1/2. It functions in the pathway bacterial outer membrane biogenesis; lipopolysaccharide biosynthesis. Catalyzes the transfer of 4-deoxy-4-formamido-L-arabinose from UDP to undecaprenyl phosphate. The modified arabinose is attached to lipid A and is required for resistance to polymyxin and cationic antimicrobial peptides. The chain is Undecaprenyl-phosphate 4-deoxy-4-formamido-L-arabinose transferase from Salmonella newport (strain SL254).